Consider the following 232-residue polypeptide: Ubiquinone biosynthesis O-methyltransferase (232 aa).

S-adenosyl-L-methionine is bound by residues Arg36, Gly55, Asp76, and Met120.

This sequence belongs to the methyltransferase superfamily. UbiG/COQ3 family.

The enzyme catalyses a 3-demethylubiquinol + S-adenosyl-L-methionine = a ubiquinol + S-adenosyl-L-homocysteine + H(+). The catalysed reaction is a 3-(all-trans-polyprenyl)benzene-1,2-diol + S-adenosyl-L-methionine = a 2-methoxy-6-(all-trans-polyprenyl)phenol + S-adenosyl-L-homocysteine + H(+). It functions in the pathway cofactor biosynthesis; ubiquinone biosynthesis. Its function is as follows. O-methyltransferase that catalyzes the 2 O-methylation steps in the ubiquinone biosynthetic pathway. In Paraburkholderia phymatum (strain DSM 17167 / CIP 108236 / LMG 21445 / STM815) (Burkholderia phymatum), this protein is Ubiquinone biosynthesis O-methyltransferase.